We begin with the raw amino-acid sequence, 229 residues long: Potassium/proton antiporter CemA (229 aa).

The next 2 membrane-spanning stretches (helical) occupy residues 7–27 (LASLRYLACLVFLPWGISISF) and 106–126 (IISHLLANFICFATPGAYFIL).

It belongs to the CemA family.

The protein resides in the plastid. Its subcellular location is the chloroplast inner membrane. The enzyme catalyses K(+)(in) + H(+)(out) = K(+)(out) + H(+)(in). Functionally, contributes to K(+)/H(+) antiport activity by supporting proton efflux to control proton extrusion and homeostasis in chloroplasts in a light-dependent manner to modulate photosynthesis. Prevents excessive induction of non-photochemical quenching (NPQ) under continuous-light conditions. Indirectly promotes efficient inorganic carbon uptake into chloroplasts. This is Potassium/proton antiporter CemA from Cycas taitungensis (Prince sago).